The sequence spans 427 residues: Adenylosuccinate synthetase (427 aa).

GTP-binding positions include 12–18 (GDEGKGK) and 40–42 (GHT). Aspartate 13 serves as the catalytic Proton acceptor. Mg(2+) is bound by residues aspartate 13 and glycine 40. Residues 13-16 (DEGK), 38-41 (NAGH), threonine 128, arginine 142, glutamine 223, threonine 238, and arginine 302 contribute to the IMP site. Histidine 41 (proton donor) is an active-site residue. Position 298-304 (298-304 (TTTGRPR)) interacts with substrate. Residues arginine 304, 330–332 (SID), and 412–414 (SVG) contribute to the GTP site.

The protein belongs to the adenylosuccinate synthetase family. In terms of assembly, homodimer. The cofactor is Mg(2+).

The protein localises to the cytoplasm. It carries out the reaction IMP + L-aspartate + GTP = N(6)-(1,2-dicarboxyethyl)-AMP + GDP + phosphate + 2 H(+). It participates in purine metabolism; AMP biosynthesis via de novo pathway; AMP from IMP: step 1/2. Functionally, plays an important role in the de novo pathway of purine nucleotide biosynthesis. Catalyzes the first committed step in the biosynthesis of AMP from IMP. This Staphylococcus saprophyticus subsp. saprophyticus (strain ATCC 15305 / DSM 20229 / NCIMB 8711 / NCTC 7292 / S-41) protein is Adenylosuccinate synthetase.